Reading from the N-terminus, the 229-residue chain is Large ribosomal subunit protein uL1 (229 aa).

The protein belongs to the universal ribosomal protein uL1 family. In terms of assembly, part of the 50S ribosomal subunit.

Functionally, binds directly to 23S rRNA. The L1 stalk is quite mobile in the ribosome, and is involved in E site tRNA release. Its function is as follows. Protein L1 is also a translational repressor protein, it controls the translation of the L11 operon by binding to its mRNA. This Pediococcus pentosaceus (strain ATCC 25745 / CCUG 21536 / LMG 10740 / 183-1w) protein is Large ribosomal subunit protein uL1.